The primary structure comprises 589 residues: Isocitrate dehydrogenase kinase/phosphatase (589 aa).

Residues 317–323 (AAGIKGM) and lysine 338 contribute to the ATP site. Aspartate 373 is an active-site residue.

Belongs to the AceK family.

It is found in the cytoplasm. The catalysed reaction is L-seryl-[isocitrate dehydrogenase] + ATP = O-phospho-L-seryl-[isocitrate dehydrogenase] + ADP + H(+). Bifunctional enzyme which can phosphorylate or dephosphorylate isocitrate dehydrogenase (IDH) on a specific serine residue. This is a regulatory mechanism which enables bacteria to bypass the Krebs cycle via the glyoxylate shunt in response to the source of carbon. When bacteria are grown on glucose, IDH is fully active and unphosphorylated, but when grown on acetate or ethanol, the activity of IDH declines drastically concomitant with its phosphorylation. The sequence is that of Isocitrate dehydrogenase kinase/phosphatase from Colwellia psychrerythraea (strain 34H / ATCC BAA-681) (Vibrio psychroerythus).